The chain runs to 178 residues: Caveolin-1 (178 aa).

Ser-2 is subject to N-acetylserine. Residue Ser-2 is modified to Phosphoserine. Positions 2–94 (SGGKYVDSEG…WKASFTTFTV (93 aa)) are required for homooligomerization. The Cytoplasmic segment spans residues 2–104 (SGGKYVDSEG…TKYWFYRLLS (103 aa)). Lys-5 carries the N6-acetyllysine; alternate modification. Lys-5 is covalently cross-linked (Glycyl lysine isopeptide (Lys-Gly) (interchain with G-Cter in ubiquitin); alternate). Tyr-6 is modified (phosphotyrosine). Phosphoserine is present on Ser-9. The residue at position 14 (Tyr-14) is a Phosphotyrosine; by ABL1. A Phosphotyrosine modification is found at Tyr-25. Residues Lys-26, Lys-30, Lys-39, Lys-47, and Lys-57 each participate in a glycyl lysine isopeptide (Lys-Gly) (interchain with G-Cter in ubiquitin) cross-link. Residues 82–94 (DGIWKASFTTFTV) are interaction with CAVIN3. Positions 105–125 (TLFGIPMALIWGIYFAILSFL) form an intramembrane region, helical. Residues 126–178 (HIWAVVPCIKSFLIEIQCIGRVYSIYIHTFCDPLFEAVGKLFSNIRINMQKEI) lie on the Cytoplasmic side of the membrane. Residues 131–142 (VPCIKSFLIEIQ) are interacts with SPRY1, SPRY2, SPRY3 and SPRY4. 3 S-palmitoyl cysteine lipidation sites follow: Cys-133, Cys-143, and Cys-156. An interacts with SPRY1, SPRY2, and SPRY4 region spans residues 149–160 (SIYIHTFCDPLF). Residues 167 to 178 (FSNIRINMQKEI) are interacts with SPRY1, SPRY2, SPRY3 and SPRY4.

It belongs to the caveolin family. As to quaternary structure, homooligomer. Interacts with GLIPR2. Interacts with NOSTRIN. Interacts with SNAP25 and STX1A. Interacts (via the N-terminus) with DPP4; the interaction is direct. Interacts with CTNNB1, CDH1 and JUP. Interacts with PACSIN2; this interaction induces membrane tubulation. Interacts with SLC7A9. Interacts with BMX and BTK. Interacts with TGFBR1. Interacts with CAVIN3 (via leucine-zipper domain) in a cholesterol-sensitive manner. Interacts with CAVIN1. Interacts with EHD2 in a cholesterol-dependent manner. Forms a ternary complex with UBXN6 and VCP; mediates CAV1 targeting to lysosomes for degradation. Interacts with ABCG1; this interaction regulates ABCG1-mediated cholesterol efflux. Interacts with NEU3; this interaction enhances NEU3 sialidase activity within caveola. Interacts (via C-terminus) with SPRY1, SPRY2 (via C-terminus), SPRY3, and SPRY4. Interacts with IGFBP5; this interaction allows trafficking of IGFBP5 from the plasma membrane to the nucleus. In terms of processing, phosphorylated at Tyr-14 by ABL1 in response to oxidative stress. Ubiquitinated. Undergo monoubiquitination and multi- and/or polyubiquitination. Monoubiquitination of N-terminal lysines promotes integration in a ternary complex with UBXN6 and VCP which promotes oligomeric CAV1 targeting to lysosomes for degradation. Ubiquitinated by ZNRF1; leading to degradation and modulation of the TLR4-mediated immune response.

The protein resides in the golgi apparatus membrane. Its subcellular location is the cell membrane. It is found in the membrane. The protein localises to the caveola. It localises to the membrane raft. In terms of biological role, may act as a scaffolding protein within caveolar membranes. Forms a stable heterooligomeric complex with CAV2 that targets to lipid rafts and drives caveolae formation. Mediates the recruitment of CAVIN proteins (CAVIN1/2/3/4) to the caveolae. Interacts directly with G-protein alpha subunits and can functionally regulate their activity. Involved in the costimulatory signal essential for T-cell receptor (TCR)-mediated T-cell activation. Its binding to DPP4 induces T-cell proliferation and NF-kappa-B activation in a T-cell receptor/CD3-dependent manner. Recruits CTNNB1 to caveolar membranes and may regulate CTNNB1-mediated signaling through the Wnt pathway. Negatively regulates TGFB1-mediated activation of SMAD2/3 by mediating the internalization of TGFBR1 from membrane rafts leading to its subsequent degradation. Binds 20(S)-hydroxycholesterol (20(S)-OHC). This is Caveolin-1 (CAV1) from Dasypus novemcinctus (Nine-banded armadillo).